We begin with the raw amino-acid sequence, 486 residues long: UDP-N-acetylmuramoyl-L-alanyl-D-glutamate--2,6-diaminopimelate ligase (486 aa).

Ser31 contributes to the UDP-N-acetyl-alpha-D-muramoyl-L-alanyl-D-glutamate binding site. 109 to 115 (GTNGKTT) is an ATP binding site. UDP-N-acetyl-alpha-D-muramoyl-L-alanyl-D-glutamate is bound by residues Asn150, 151–152 (TT), Ser178, and Arg186. Lys218 is subject to N6-carboxylysine. Meso-2,6-diaminopimelate contacts are provided by residues Arg381, 405-408 (DNPR), Gly455, and Glu459. Positions 405-408 (DNPR) match the Meso-diaminopimelate recognition motif motif.

This sequence belongs to the MurCDEF family. MurE subfamily. The cofactor is Mg(2+). Carboxylation is probably crucial for Mg(2+) binding and, consequently, for the gamma-phosphate positioning of ATP.

It localises to the cytoplasm. It carries out the reaction UDP-N-acetyl-alpha-D-muramoyl-L-alanyl-D-glutamate + meso-2,6-diaminopimelate + ATP = UDP-N-acetyl-alpha-D-muramoyl-L-alanyl-gamma-D-glutamyl-meso-2,6-diaminopimelate + ADP + phosphate + H(+). It participates in cell wall biogenesis; peptidoglycan biosynthesis. In terms of biological role, catalyzes the addition of meso-diaminopimelic acid to the nucleotide precursor UDP-N-acetylmuramoyl-L-alanyl-D-glutamate (UMAG) in the biosynthesis of bacterial cell-wall peptidoglycan. This chain is UDP-N-acetylmuramoyl-L-alanyl-D-glutamate--2,6-diaminopimelate ligase, found in Halalkalibacterium halodurans (strain ATCC BAA-125 / DSM 18197 / FERM 7344 / JCM 9153 / C-125) (Bacillus halodurans).